The sequence spans 445 residues: Phosphoglucosamine mutase (445 aa).

The Phosphoserine intermediate role is filled by serine 99. Mg(2+)-binding residues include serine 99, aspartate 242, aspartate 244, and aspartate 246. Residue serine 99 is modified to Phosphoserine.

It belongs to the phosphohexose mutase family. Mg(2+) is required as a cofactor. In terms of processing, activated by phosphorylation.

The catalysed reaction is alpha-D-glucosamine 1-phosphate = D-glucosamine 6-phosphate. Functionally, catalyzes the conversion of glucosamine-6-phosphate to glucosamine-1-phosphate. The protein is Phosphoglucosamine mutase of Campylobacter jejuni (strain RM1221).